The following is a 150-amino-acid chain: D-aminoacyl-tRNA deacylase (150 aa).

The Gly-cisPro motif, important for rejection of L-amino acids signature appears at 138–139 (GP).

Belongs to the DTD family. Homodimer.

Its subcellular location is the cytoplasm. The catalysed reaction is glycyl-tRNA(Ala) + H2O = tRNA(Ala) + glycine + H(+). It catalyses the reaction a D-aminoacyl-tRNA + H2O = a tRNA + a D-alpha-amino acid + H(+). Functionally, an aminoacyl-tRNA editing enzyme that deacylates mischarged D-aminoacyl-tRNAs. Also deacylates mischarged glycyl-tRNA(Ala), protecting cells against glycine mischarging by AlaRS. Acts via tRNA-based rather than protein-based catalysis; rejects L-amino acids rather than detecting D-amino acids in the active site. By recycling D-aminoacyl-tRNA to D-amino acids and free tRNA molecules, this enzyme counteracts the toxicity associated with the formation of D-aminoacyl-tRNA entities in vivo and helps enforce protein L-homochirality. This is D-aminoacyl-tRNA deacylase from Bacteroides fragilis (strain ATCC 25285 / DSM 2151 / CCUG 4856 / JCM 11019 / LMG 10263 / NCTC 9343 / Onslow / VPI 2553 / EN-2).